Reading from the N-terminus, the 465-residue chain is 23S rRNA (uracil(1939)-C(5))-methyltransferase RlmD (465 aa).

The tract at residues 1–22 (MSEAVPTSARKSKNAPVAPGPA) is disordered. The TRAM domain maps to 16 to 80 (PVAPGPAPVL…PSYEQATVVD (65 aa)). Residues C93, C99, C102, and C181 each contribute to the [4Fe-4S] cluster site. 6 residues coordinate S-adenosyl-L-methionine: Q289, F318, N323, E339, N367, and D388. The active-site Nucleophile is the C421.

It belongs to the class I-like SAM-binding methyltransferase superfamily. RNA M5U methyltransferase family. RlmD subfamily.

It carries out the reaction uridine(1939) in 23S rRNA + S-adenosyl-L-methionine = 5-methyluridine(1939) in 23S rRNA + S-adenosyl-L-homocysteine + H(+). Functionally, catalyzes the formation of 5-methyl-uridine at position 1939 (m5U1939) in 23S rRNA. This chain is 23S rRNA (uracil(1939)-C(5))-methyltransferase RlmD, found in Burkholderia cenocepacia (strain HI2424).